Reading from the N-terminus, the 376-residue chain is MGLLAFLKTQFVLHLLVGFVFVVSGLVINFVQLCTLALWPVSKQLYRRLNCRLAYSLWSQLVMLLEWWSCTECTLFTDQATVERFGKEHAVIILNHNFEIDFLCGWTMCERFGVLGSSKVLAKKELLYVPLIGWTWYFLEIVFCKRKWEEDRDTVVEGLRRLSDYPEYMWFLLYCEGTRFTETKHRVSMEVAAAKGLPVLKYHLLPRTKGFTTAVKCLRGTVAAVYDVTLNFRGNKNPSLLGILYGKKYEADMCVRRFPLEDIPLDEKEAAQWLHKLYQEKDALQEIYNQKGMFPGEQFKPARRPWTLLNFLSWATILLSPLFSFVLGVFASGSPLLILTFLGFVGAASFGVRRLIGVTEIEKGSSYGNQEFKKKE.

The Cytoplasmic segment spans residues 1–124; that stretch reads MGLLAFLKTQ…LGSSKVLAKK (124 aa). The HXXXXD motif signature appears at 96–101; it reads HNFEID. A helical transmembrane segment spans residues 125-145; sequence ELLYVPLIGWTWYFLEIVFCK. Residues 146-316 lie on the Lumenal side of the membrane; that stretch reads RKWEEDRDTV…TLLNFLSWAT (171 aa). Residues 317–339 form a helical membrane-spanning segment; it reads ILLSPLFSFVLGVFASGSPLLIL. The Cytoplasmic portion of the chain corresponds to 340–376; that stretch reads TFLGFVGAASFGVRRLIGVTEIEKGSSYGNQEFKKKE.

Belongs to the 1-acyl-sn-glycerol-3-phosphate acyltransferase family. Widely expressed with highest levels in testis, pancreas and kidney, followed by spleen, lung, adipose tissue and liver.

It is found in the endoplasmic reticulum membrane. The protein resides in the nucleus envelope. It catalyses the reaction a 1-acyl-sn-glycero-3-phosphate + an acyl-CoA = a 1,2-diacyl-sn-glycero-3-phosphate + CoA. It carries out the reaction pentadecanoyl-CoA + 1-(9Z-octadecenoyl)-sn-glycero-3-phosphate = 1-(9Z)-octadecenoyl-2-pentadecanoyl-sn-glycero-3-phosphate + CoA. The catalysed reaction is heptadecanoyl-CoA + 1-(9Z-octadecenoyl)-sn-glycero-3-phosphate = 1-(9Z)-octadecenoyl-2-heptadecanoyl-sn-glycero-3-phosphate + CoA. The enzyme catalyses 1-(9Z-octadecenoyl)-sn-glycero-3-phosphate + octadecanoyl-CoA = 1-(9Z-octadecenoyl)-2-octadecanoyl-sn-glycero-3-phosphate + CoA. It catalyses the reaction nonadecanoyl-CoA + 1-(9Z-octadecenoyl)-sn-glycero-3-phosphate = 1-(9Z)-octadecenoyl-2-nonadecanoyl-sn-glycero-3-phosphate + CoA. It carries out the reaction 1-(9Z-octadecenoyl)-sn-glycero-3-phosphate + (5Z,8Z,11Z,14Z)-eicosatetraenoyl-CoA = 1-(9Z)-octadecenoyl-2-(5Z,8Z,11Z,14Z)-eicosatetraenoyl-sn-glycero-3-phosphate + CoA. The catalysed reaction is 1-(9Z-octadecenoyl)-sn-glycero-3-phosphate + (9Z)-octadecenoyl-CoA = 1,2-di-(9Z-octadecenoyl)-sn-glycero-3-phosphate + CoA. The enzyme catalyses 1-(9Z-octadecenoyl)-sn-glycero-3-phosphate + (9Z,12Z)-octadecadienoyl-CoA = 1-(9Z)-octadecenoyl-2-(9Z,12Z)-octadecadienoyl-sn-glycero-3-phosphate + CoA. It catalyses the reaction 1-(9Z-octadecenoyl)-sn-glycero-3-phosphocholine + (5Z,8Z,11Z,14Z)-eicosatetraenoyl-CoA = 1-(9Z)-octadecenoyl-2-(5Z,8Z,11Z,14Z)-icosatetraenoyl-sn-glycero-3-phosphocholine + CoA. It carries out the reaction 1-(9Z-octadecenoyl)-sn-glycero-3-phospho-(1D-myo-inositol) + (5Z,8Z,11Z,14Z)-eicosatetraenoyl-CoA = 1-(9Z-octadecenoyl)-2-(5Z,8Z,11Z,14Z-eicosatetraenoyl)-sn-glycero-3-phospho-1D-myo-inositol + CoA. The catalysed reaction is 1-(9Z-octadecenoyl)-sn-glycero-3-phospho-L-serine + (5Z,8Z,11Z,14Z)-eicosatetraenoyl-CoA = 1-(9Z-octadecenoyl)-2-(5Z,8Z,11Z,14Z-eicosatetraenoyl)-sn-glycero-3-phospho-L-serine + CoA. The enzyme catalyses 1-hexadecanoyl-sn-glycero-3-phosphate + (9Z)-octadecenoyl-CoA = 1-hexadecanoyl-2-(9Z-octadecenoyl)-sn-glycero-3-phosphate + CoA. It catalyses the reaction 1-hexadecanoyl-sn-glycero-3-phosphate + (5Z,8Z,11Z,14Z)-eicosatetraenoyl-CoA = 1-hexadecanoyl-2-(5Z,8Z,11Z,14Z-eicosatetraenoyl)-sn-glycero-3-phosphate + CoA. It carries out the reaction 1-heptadecanoyl-sn-glycero-3-phosphate + (5Z,8Z,11Z,14Z)-eicosatetraenoyl-CoA = 1-heptadecanoyl-2-(5Z,8Z,11Z,14Z)-eicosatetraenoyl-sn-glycero-3-phosphate + CoA. The catalysed reaction is 1-octadecanoyl-sn-glycero-3-phosphate + (9Z)-octadecenoyl-CoA = 1-octadecanoyl-2-(9Z-octadecenoyl)-sn-glycero-3-phosphate + CoA. The enzyme catalyses 1-octadecanoyl-sn-glycero-3-phosphate + (5Z,8Z,11Z,14Z)-eicosatetraenoyl-CoA = 1-octadecanoyl-2-(5Z,8Z,11Z,14Z-eicosatetraenoyl)-sn-glycero-3-phosphate + CoA. It catalyses the reaction 1-(9Z-octadecenoyl)-sn-glycero-3-phosphate + hexadecanoyl-CoA = 1-hexadecanoyl-2-(9Z-octadecenoyl)-sn-glycero-3-phosphate + CoA. It carries out the reaction 1-O-(9Z-octadecenyl)-sn-glycero-3-phosphate + (5Z,8Z,11Z,14Z)-eicosatetraenoyl-CoA = 1-O-(9Z-octadecenyl)-2-(5Z,8Z,11Z,14Z-eicosatetraenoyl)-sn-glycero-3-phosphate + CoA. The catalysed reaction is a 1-acyl-sn-glycero-3-phospho-(1D-myo-inositol) + (5Z,8Z,11Z,14Z)-eicosatetraenoyl-CoA = a 1-acyl-2-(5Z,8Z,11Z,14Z-eicosatetraenoyl)-sn-glycero-3-phospho-(1D-myo-inositol) + CoA. The protein operates within phospholipid metabolism; CDP-diacylglycerol biosynthesis; CDP-diacylglycerol from sn-glycerol 3-phosphate: step 2/3. Its function is as follows. Converts 1-acyl-sn-glycerol-3-phosphate (lysophosphatidic acid or LPA) into 1,2-diacyl-sn-glycerol-3-phosphate (phosphatidic acid or PA) by incorporating an acyl moiety at the sn-2 position of the glycerol backbone. Acts on LPA containing saturated or unsaturated fatty acids C16:0-C20:4 at the sn-1 position using C18:1, C20:4 or C18:2-CoA as the acyl donor. Also acts on lysophosphatidylcholine, lysophosphatidylinositol and lysophosphatidylserine using C18:1 or C20:4-CoA. Has a preference for arachidonoyl-CoA as a donor. Also has a modest lysophosphatidylinositol acyltransferase (LPIAT) activity, converts lysophosphatidylinositol (LPI) into phosphatidylinositol. This chain is 1-acyl-sn-glycerol-3-phosphate acyltransferase gamma (AGPAT3), found in Homo sapiens (Human).